We begin with the raw amino-acid sequence, 480 residues long: uncharacterized protein (480 aa).

Residues 1–20 (MDVKDTGINRSDTPISDQDH) form a disordered region.

This is an uncharacterized protein from Arabidopsis thaliana (Mouse-ear cress).